A 73-amino-acid polypeptide reads, in one-letter code: Disintegrin mojastin-2 (73 aa).

The Disintegrin domain maps to 1 to 73 (EAGEECDCGS…ADCPRNGLYG (73 aa)). 6 disulfide bridges follow: Cys6–Cys21, Cys8–Cys16, Cys15–Cys38, Cys29–Cys35, Cys34–Cys59, and Cys47–Cys66. The Cell attachment site motif lies at 51–53 (RGD).

This sequence belongs to the venom metalloproteinase (M12B) family. P-II subfamily. P-IIa sub-subfamily. In terms of assembly, monomer (disintegrin). As to expression, expressed by the venom gland.

The protein resides in the secreted. Functionally, inhibits the three processes involved in platelet function (adhesion, activation and aggregation). It inhibits platelet adhesion to fibronectin with an IC(50) of 58.6 nM. It inhibits ATP release from platelet induced by ADP with an IC(50) of 19.5 nM on platelet-rich plasma, probably by binding to ADP receptors (P2RY1 and P2RY12). Finally, it inhibits ADP-induced platelet aggregation with IC(50) of 44.7 nM on platelet-rich plasma and 19.3 nM on whole blood, probably by binding to alpha-IIb/beta-3 (ITGA2B/ITGB3). Inhibits ADP-induced platelet aggregation (IC(50) = 13.8 nM) probably by binding to alpha-IIb/beta-3 (ITGA2B/ITGB3) located on the platelet surface. The protein is Disintegrin mojastin-2 of Crotalus scutulatus scutulatus (Mojave rattlesnake).